Consider the following 211-residue polypeptide: Imidazole glycerol phosphate synthase subunit HisH (211 aa).

A Glutamine amidotransferase type-1 domain is found at 5–211 (SVALLDYGSG…QLLRNWVDSL (207 aa)). Catalysis depends on Cys-83, which acts as the Nucleophile. Active-site residues include His-192 and Glu-194.

Heterodimer of HisH and HisF.

It localises to the cytoplasm. It catalyses the reaction 5-[(5-phospho-1-deoxy-D-ribulos-1-ylimino)methylamino]-1-(5-phospho-beta-D-ribosyl)imidazole-4-carboxamide + L-glutamine = D-erythro-1-(imidazol-4-yl)glycerol 3-phosphate + 5-amino-1-(5-phospho-beta-D-ribosyl)imidazole-4-carboxamide + L-glutamate + H(+). The enzyme catalyses L-glutamine + H2O = L-glutamate + NH4(+). It participates in amino-acid biosynthesis; L-histidine biosynthesis; L-histidine from 5-phospho-alpha-D-ribose 1-diphosphate: step 5/9. IGPS catalyzes the conversion of PRFAR and glutamine to IGP, AICAR and glutamate. The HisH subunit catalyzes the hydrolysis of glutamine to glutamate and ammonia as part of the synthesis of IGP and AICAR. The resulting ammonia molecule is channeled to the active site of HisF. The sequence is that of Imidazole glycerol phosphate synthase subunit HisH from Nocardia farcinica (strain IFM 10152).